The chain runs to 308 residues: D-alanine--D-alanine ligase (308 aa).

Residues 105-302 (KAIFKALGLD…FPELCERILD (198 aa)) enclose the ATP-grasp domain. An ATP-binding site is contributed by 133 to 188 (DLPFGVPCVVKPAGEGSSVGVQIVKDAARLADACREAARYKGDVVVERYVKGTEVN). Asp-256, Glu-269, and Asn-271 together coordinate Mg(2+).

It belongs to the D-alanine--D-alanine ligase family. Requires Mg(2+) as cofactor. The cofactor is Mn(2+).

The protein localises to the cytoplasm. The enzyme catalyses 2 D-alanine + ATP = D-alanyl-D-alanine + ADP + phosphate + H(+). The protein operates within cell wall biogenesis; peptidoglycan biosynthesis. In terms of biological role, cell wall formation. In Anaeromyxobacter sp. (strain Fw109-5), this protein is D-alanine--D-alanine ligase.